A 300-amino-acid chain; its full sequence is Cathepsin B-like CP2 (300 aa).

A signal peptide spans 1-19 (MKLFLLAAAAFSAPALTVS). Intrachain disulfides connect Cys-88-Cys-115, Cys-98-Cys-141, and Cys-134-Cys-177. Cys-101 is a catalytic residue. Residues His-245 and Asn-266 contribute to the active site.

It belongs to the peptidase C1 family.

The protein localises to the vacuole. Its function is as follows. Thiol protease which is required for parasite excystation and invasion of the proximal small intestine of the human host. This is Cathepsin B-like CP2 (CP2) from Giardia intestinalis (Giardia lamblia).